The sequence spans 218 residues: Large ribosomal subunit protein uL2c (218 aa).

The segment at 165 to 192 (GVVKNPVDHPHGGGEGRSPIGRSHPVTP) is disordered.

Belongs to the universal ribosomal protein uL2 family. As to quaternary structure, part of the 50S ribosomal subunit.

It localises to the plastid. The protein localises to the chloroplast. The polypeptide is Large ribosomal subunit protein uL2c (rpl2) (Bigelowiella natans (Pedinomonas minutissima)).